We begin with the raw amino-acid sequence, 397 residues long: Ribosomal RNA large subunit methyltransferase I (397 aa).

Residues T2–V79 enclose the PUA domain.

This sequence belongs to the methyltransferase superfamily. RlmI family.

Its subcellular location is the cytoplasm. It carries out the reaction cytidine(1962) in 23S rRNA + S-adenosyl-L-methionine = 5-methylcytidine(1962) in 23S rRNA + S-adenosyl-L-homocysteine + H(+). In terms of biological role, specifically methylates the cytosine at position 1962 (m5C1962) of 23S rRNA. This chain is Ribosomal RNA large subunit methyltransferase I, found in Vibrio campbellii (strain ATCC BAA-1116).